Consider the following 148-residue polypeptide: Nucleoside diphosphate kinase B (148 aa).

Residues Lys-9, Phe-57, Arg-85, Thr-91, Arg-102, and Asn-112 each contribute to the ATP site. His-115 functions as the Pros-phosphohistidine intermediate in the catalytic mechanism.

The protein belongs to the NDK family. Mg(2+) is required as a cofactor.

It carries out the reaction a 2'-deoxyribonucleoside 5'-diphosphate + ATP = a 2'-deoxyribonucleoside 5'-triphosphate + ADP. The catalysed reaction is a ribonucleoside 5'-diphosphate + ATP = a ribonucleoside 5'-triphosphate + ADP. Its function is as follows. Major role in the synthesis of nucleoside triphosphates other than ATP. The ATP gamma phosphate is transferred to the NDP beta phosphate via a ping-pong mechanism, using a phosphorylated active-site intermediate. The sequence is that of Nucleoside diphosphate kinase B from Flaveria bidentis (Coastal plain yellowtops).